The following is a 329-amino-acid chain: Sulfate/thiosulfate import ATP-binding protein CysA (329 aa).

The ABC transporter domain occupies 3–237 (IEVRNVSKRF…PANDFVYHFL (235 aa)). Residue 35 to 42 (GPSGCGKT) coordinates ATP.

The protein belongs to the ABC transporter superfamily. Sulfate/tungstate importer (TC 3.A.1.6) family. The complex is composed of two ATP-binding proteins (CysA), two transmembrane proteins (CysT and CysW) and a solute-binding protein (CysP).

The protein localises to the cell inner membrane. It carries out the reaction sulfate(out) + ATP + H2O = sulfate(in) + ADP + phosphate + H(+). The enzyme catalyses thiosulfate(out) + ATP + H2O = thiosulfate(in) + ADP + phosphate + H(+). Functionally, part of the ABC transporter complex CysAWTP involved in sulfate/thiosulfate import. Responsible for energy coupling to the transport system. The sequence is that of Sulfate/thiosulfate import ATP-binding protein CysA from Pseudomonas putida (strain ATCC 47054 / DSM 6125 / CFBP 8728 / NCIMB 11950 / KT2440).